Consider the following 171-residue polypeptide: Cytochrome c oxidase subunit 5b-2, mitochondrial (171 aa).

A mitochondrion-targeting transit peptide spans 1–54 (MWRRIVSSHLKSISAVGSCAAPSCRHAVVESTHLSLSTRASSIPAYSSIFSRLI). Residues Cys-121, Cys-145, and Cys-148 each coordinate Zn(2+).

Belongs to the cytochrome c oxidase subunit 5B (TC 3.D.4.11) family.

Its subcellular location is the mitochondrion inner membrane. This protein is one of the nuclear-coded polypeptide chains of cytochrome c oxidase, the terminal oxidase in mitochondrial electron transport. This chain is Cytochrome c oxidase subunit 5b-2, mitochondrial (COX5B-2), found in Arabidopsis thaliana (Mouse-ear cress).